The primary structure comprises 384 residues: Autophagy-related protein 25 (384 aa).

Coiled-coil stretches lie at residues 132 to 236 (KETA…RRAS) and 342 to 379 (KKNN…QWKT). The disordered stretch occupies residues 224 to 247 (ESRLSNMNKRRASPRDDAEAEPKR). Over residues 236-247 (SPRDDAEAEPKR) the composition is skewed to basic and acidic residues.

The protein belongs to the ADIP family.

It is found in the preautophagosomal structure membrane. Specifically required for selective degradation of peroxisomes via macropexophagy. The chain is Autophagy-related protein 25 (ATG25) from Pichia angusta (Yeast).